The chain runs to 1153 residues: AP-3 complex subunit delta-1 (1153 aa).

Ala2 carries the N-acetylalanine modification. HEAT repeat units lie at residues 34 to 71 (KYIS…LGYD), 77 to 114 (FNII…LTTN), 142 to 179 (DLAR…KYPE), 180 to 216 (SLRP…RNPK), 254 to 292 (RLGK…SLSS), 299 to 336 (ASIQ…THPK), 338 to 373 (VQSH…KKNL), 375 to 409 (EIVK…QSNY), 431 to 468 (TRHG…SAHL), 497 to 535 (QEPH…SILQ), and 548 to 585 (AVTQ…IQKL). 2 disordered regions span residues 629-696 (EPLS…YQDT) and 726-920 (KLEE…PPES). Phosphoserine is present on residues Ser632, Ser634, Ser636, and Ser658. Residues 639–675 (ERPRAVFHEEEQRRPKHRPSEADEEELARRREARKQE) are compositionally biased toward basic and acidic residues. Positions 659–679 (EADEEELARRREARKQEQANN) form a coiled coil. At Ser688 the chain carries Phosphoserine. Residues 725–756 (VKLEEERRHRQKLEKDKRRKKRKEKEKKGKRR) are a coiled coil. Residues 726–740 (KLEEERRHRQKLEKD) are compositionally biased toward basic and acidic residues. Over residues 741–758 (KRRKKRKEKEKKGKRRHS) the composition is skewed to basic residues. Residues Ser758 and Ser759 each carry the phosphoserine modification. Position 762 is a phosphothreonine (Thr762). Phosphoserine occurs at positions 764, 785, 788, 828, and 829. Residues 777-794 (VTEEMPENALPSDEDDKD) show a composition bias toward acidic residues. Residues 795–839 (PNDPYRALDIDLDKPLADSEKLPIQKHRNTETSKSPEKDVPMVEK) are compositionally biased toward basic and acidic residues. 2 stretches are compositionally biased toward basic residues: residues 840–853 (KSKK…KHKE) and 863–879 (EKEK…KHRK). Residues 845 to 869 (KKKEKKHKEKERDKEKKKEKEKKKS) are a coiled coil. A Phosphoserine modification is found at Val931.

It belongs to the adaptor complexes large subunit family. AP-3 associates with the BLOC-1 complex. Adaptor protein complex 3 (AP-3) is a heterotetramer composed of two large adaptins (delta-type subunit AP3D1 and beta-type subunit AP3B1 or AP3B2), a medium adaptin (mu-type subunit AP3M1 or AP3M2) and a small adaptin (sigma-type subunit APS1 or AP3S2). Interacts with SLC30A2. Interacts with CLN3 (via dileucine motif); this interaction facilitates lysosomal targeting. In terms of tissue distribution, present in all adult tissues examined with the highest levels in skeletal muscle, heart, pancreas and testis.

The protein localises to the cytoplasm. Its subcellular location is the golgi apparatus membrane. Part of the AP-3 complex, an adaptor-related complex which is not clathrin-associated. The complex is associated with the Golgi region as well as more peripheral structures. It facilitates the budding of vesicles from the Golgi membrane and may be directly involved in trafficking to lysosomes. Involved in process of CD8+ T-cell and NK cell degranulation. In concert with the BLOC-1 complex, AP-3 is required to target cargos into vesicles assembled at cell bodies for delivery into neurites and nerve terminals. The chain is AP-3 complex subunit delta-1 (AP3D1) from Homo sapiens (Human).